The primary structure comprises 315 residues: Porphobilinogen deaminase (315 aa).

An S-(dipyrrolylmethanemethyl)cysteine modification is found at Cys-251.

The protein belongs to the HMBS family. Monomer. Dipyrromethane serves as cofactor.

The catalysed reaction is 4 porphobilinogen + H2O = hydroxymethylbilane + 4 NH4(+). Its pathway is porphyrin-containing compound metabolism; protoporphyrin-IX biosynthesis; coproporphyrinogen-III from 5-aminolevulinate: step 2/4. In terms of biological role, tetrapolymerization of the monopyrrole PBG into the hydroxymethylbilane pre-uroporphyrinogen in several discrete steps. This Sphingopyxis alaskensis (strain DSM 13593 / LMG 18877 / RB2256) (Sphingomonas alaskensis) protein is Porphobilinogen deaminase.